Here is a 180-residue protein sequence, read N- to C-terminus: Large ribosomal subunit protein uL6 (180 aa).

Belongs to the universal ribosomal protein uL6 family. Part of the 50S ribosomal subunit.

In terms of biological role, this protein binds to the 23S rRNA, and is important in its secondary structure. It is located near the subunit interface in the base of the L7/L12 stalk, and near the tRNA binding site of the peptidyltransferase center. The protein is Large ribosomal subunit protein uL6 of Christiangramia forsetii (strain DSM 17595 / CGMCC 1.15422 / KT0803) (Gramella forsetii).